A 63-amino-acid polypeptide reads, in one-letter code: UPF0370 protein ECA1289 (63 aa).

The helical transmembrane segment at Trp3–Ile23 threads the bilayer. The tract at residues Pro39–Pro63 is disordered.

Belongs to the UPF0370 family.

Its subcellular location is the cell membrane. This chain is UPF0370 protein ECA1289, found in Pectobacterium atrosepticum (strain SCRI 1043 / ATCC BAA-672) (Erwinia carotovora subsp. atroseptica).